Consider the following 445-residue polypeptide: Canavalin (445 aa).

The N-terminal stretch at 1-26 (MAFSARFPLWLLLGVVLLASVSASFA) is a signal peptide. Cupin type-1 domains lie at 49–207 (YLFR…DEIE) and 249–407 (FNLR…EEVE).

The protein belongs to the 7S seed storage protein family. In terms of assembly, homotrimer.

Its function is as follows. Seed storage protein. This Canavalia gladiata (Sword bean) protein is Canavalin.